The chain runs to 334 residues: tRNA U34 carboxymethyltransferase (334 aa).

Carboxy-S-adenosyl-L-methionine contacts are provided by residues Lys-91, Trp-105, Lys-110, Gly-130, 152-154 (DPT), 181-182 (IE), Met-196, Tyr-200, and Arg-315.

The protein belongs to the class I-like SAM-binding methyltransferase superfamily. CmoB family. Homotetramer.

It carries out the reaction carboxy-S-adenosyl-L-methionine + 5-hydroxyuridine(34) in tRNA = 5-carboxymethoxyuridine(34) in tRNA + S-adenosyl-L-homocysteine + H(+). Its function is as follows. Catalyzes carboxymethyl transfer from carboxy-S-adenosyl-L-methionine (Cx-SAM) to 5-hydroxyuridine (ho5U) to form 5-carboxymethoxyuridine (cmo5U) at position 34 in tRNAs. This is tRNA U34 carboxymethyltransferase from Klebsiella pneumoniae (strain 342).